Consider the following 266-residue polypeptide: Type II pantothenate kinase (266 aa).

Residue 6-13 (DAGGTLIK) coordinates ATP. The active-site Proton acceptor is Glu-70. Residues Thr-99, 121–125 (GGMIQ), Tyr-137, and Ser-225 contribute to the ATP site.

The protein belongs to the type II pantothenate kinase family. Homodimer.

It is found in the cytoplasm. The catalysed reaction is (R)-pantothenate + ATP = (R)-4'-phosphopantothenate + ADP + H(+). The protein operates within cofactor biosynthesis; coenzyme A biosynthesis; CoA from (R)-pantothenate: step 1/5. Functionally, catalyzes the phosphorylation of pantothenate (Pan), the first step in CoA biosynthesis. This Staphylococcus haemolyticus (strain JCSC1435) protein is Type II pantothenate kinase.